The chain runs to 315 residues: Methionyl-tRNA formyltransferase (315 aa).

113–116 contacts (6S)-5,6,7,8-tetrahydrofolate; sequence SILP.

It belongs to the Fmt family.

It catalyses the reaction L-methionyl-tRNA(fMet) + (6R)-10-formyltetrahydrofolate = N-formyl-L-methionyl-tRNA(fMet) + (6S)-5,6,7,8-tetrahydrofolate + H(+). Attaches a formyl group to the free amino group of methionyl-tRNA(fMet). The formyl group appears to play a dual role in the initiator identity of N-formylmethionyl-tRNA by promoting its recognition by IF2 and preventing the misappropriation of this tRNA by the elongation apparatus. This chain is Methionyl-tRNA formyltransferase, found in Aliivibrio fischeri (strain ATCC 700601 / ES114) (Vibrio fischeri).